The following is a 161-amino-acid chain: Lipoprotein signal peptidase (161 aa).

4 helical membrane passes run 8–28, 40–60, 67–87, and 91–111; these read LKYF…KYLA, ITSF…SLLS, QMIM…YLII, and ITEK…LGNF. Active-site residues include aspartate 122 and aspartate 140. Residues 136-156 form a helical membrane-spanning segment; the sequence is FNIADSAITCGVVILIAASLF.

It belongs to the peptidase A8 family.

It is found in the cell inner membrane. It carries out the reaction Release of signal peptides from bacterial membrane prolipoproteins. Hydrolyzes -Xaa-Yaa-Zaa-|-(S,diacylglyceryl)Cys-, in which Xaa is hydrophobic (preferably Leu), and Yaa (Ala or Ser) and Zaa (Gly or Ala) have small, neutral side chains.. The protein operates within protein modification; lipoprotein biosynthesis (signal peptide cleavage). Functionally, this protein specifically catalyzes the removal of signal peptides from prolipoproteins. This Francisella tularensis subsp. tularensis (strain FSC 198) protein is Lipoprotein signal peptidase.